We begin with the raw amino-acid sequence, 91 residues long: Dynein light chain 1, cytoplasmic (91 aa).

It belongs to the dynein light chain family. Homodimer. Cytoplasmic dynein consists of two catalytic heavy chains (HCs) and a number of non-catalytic subunits which present intermediate chains (ICs), light intermediate chains (LICs) and light chains (LCs). Component of the nuclear pore complex (NPC). NPC constitutes the exclusive means of nucleocytoplasmic transport. NPCs allow the passive diffusion of ions and small molecules and the active, nuclear transport receptor-mediated bidirectional transport of macromolecules such as proteins, RNAs, ribonucleoparticles (RNPs), and ribosomal subunits across the nuclear envelope. Due to its 8-fold rotational symmetry, all subunits are present with 8 copies or multiples thereof.

It is found in the cytoplasm. The protein localises to the cytoskeleton. Its subcellular location is the nucleus. It localises to the nuclear pore complex. Its function is as follows. Acts as one of several non-catalytic accessory components of the cytoplasmic dynein complex that are thought to be involved in linking dynein to cargos and to adapter proteins that regulate dynein function. Cytoplasmic dynein 1 acts as a motor for the intracellular retrograde motility of vesicles and organelles along microtubules. May play a role in changing or maintaining the spatial distribution of cytoskeletal structures. Also a component of the nuclear pore complex. This Debaryomyces hansenii (strain ATCC 36239 / CBS 767 / BCRC 21394 / JCM 1990 / NBRC 0083 / IGC 2968) (Yeast) protein is Dynein light chain 1, cytoplasmic (DYN2).